The sequence spans 339 residues: SVP1-like protein 2 (339 aa).

WD repeat units lie at residues 177 to 217 (AHAN…LVRE) and 222 to 261 (LDRT…ENKR).

This sequence belongs to the WD repeat PROPPIN family.

The protein localises to the vacuole membrane. The protein resides in the cytoplasmic vesicle membrane. Its function is as follows. Involved in mitochondrial or peroxisomal functions and amino acid signaling pathways. This Kluyveromyces lactis (strain ATCC 8585 / CBS 2359 / DSM 70799 / NBRC 1267 / NRRL Y-1140 / WM37) (Yeast) protein is SVP1-like protein 2 (HSV2).